Consider the following 466-residue polypeptide: MITLYNTLTRRKETFEPIEPGKVKMYVCGPTVYNYIHIGNARPAINYDVVRRYFEYKGYEVIYVSNFTDVDDKLINRSKELNESVPEIAEKYIKAFYEDVGALNVKKATSNPRVMHHMGEIIDFIKELVDEGYAYESDGDVYFRTRQFDGYGKLSHQSLDDLKVGARIEAGEQKEDALDFTLWKKAKPGEISWNSPFGKGRPGWHIECSVMAYHELGSTIDIHAGGSDLQFPHHENEIAQSEAHNHAPFANYWMHNGFINIDNEKMSKSLGNFILVHDIIKEVDPDVLRFFMISVHYRSPINYNLELVGAARSGLERIRNSYKLIEEREQIASDLEEQSEYIQQIDKILNQFETVMDDDFNTANAVTAWYDLAKLANKYVLENTTSTKVLNRFKEVYSIFSDVLGVPLKSKETEELLDEDIEQLIEERNEARKNKDFARADEIRDMLKARHIILEDTPQGVRFKRG.

Cys-28 serves as a coordination point for Zn(2+). Positions 30–40 (PTVYNYIHIGN) match the 'HIGH' region motif. Zn(2+)-binding residues include Cys-208, His-233, and Glu-237. A 'KMSKS' region motif is present at residues 265–269 (KMSKS). An ATP-binding site is contributed by Lys-268.

This sequence belongs to the class-I aminoacyl-tRNA synthetase family. As to quaternary structure, monomer. The cofactor is Zn(2+).

Its subcellular location is the cytoplasm. The catalysed reaction is tRNA(Cys) + L-cysteine + ATP = L-cysteinyl-tRNA(Cys) + AMP + diphosphate. The sequence is that of Cysteine--tRNA ligase from Staphylococcus epidermidis (strain ATCC 35984 / DSM 28319 / BCRC 17069 / CCUG 31568 / BM 3577 / RP62A).